The chain runs to 1291 residues: Cytoplasmic FMR1-interacting protein (1291 aa).

A disordered region spans residues 1270–1291 (PSVISSSSHYQDPQKLRQSINN). Residues 1271-1291 (SVISSSSHYQDPQKLRQSINN) show a composition bias toward polar residues.

The protein belongs to the CYFIP family. In terms of assembly, interacts with Fmr1 and Rac1. Component of the WAVE complex composed of Hem/Kette, Scar/Wave and Cyfip where it binds through its C-terminus directly to Hem. In the embryo, expressed mainly in the gut and in the developing central nervous system where high levels of expression are found in the CNS neuropile. Expression in the gut diminishes as development proceeds (at protein level). In the adult, expressed specifically in the nervous system.

Its subcellular location is the cytoplasm. Its function is as follows. Plays a role in guidance and morphology of central and peripheral axons and in synaptic morphology. Also required for formation of cell membrane protrusions and for bristle development. Plays a role in regulating mitochondrial activity, energy metabolism and membrane potential which maintains normal gamma-aminobutyric acid (GABA) signaling and ensures normal social behavior. The protein is Cytoplasmic FMR1-interacting protein of Drosophila melanogaster (Fruit fly).